Consider the following 592-residue polypeptide: Medium-chain-fatty-acid--[acyl-carrier-protein] ligase JamA (592 aa).

It belongs to the ATP-dependent AMP-binding enzyme family.

The catalysed reaction is a medium-chain fatty acid + holo-[ACP] + ATP = a medium-chain fatty acyl-[ACP] + AMP + diphosphate. It catalyses the reaction a medium-chain fatty acid + ATP + H(+) = a medium-chain fatty acyl-AMP + diphosphate. It carries out the reaction a medium-chain fatty acyl-AMP + holo-[ACP] = a medium-chain fatty acyl-[ACP] + AMP + H(+). Ligase involved in the biosynthesis of jamaicamides, which show sodium channel blocking activity and fish toxicity. Initiates jamaicamide biosynthesis by the activation of the starter unit, 5-hexenoic acid, followed by the loading of the activated 5-hexenoic acid onto the acyl carrier protein JamC. In vitro, can also use 5-hexynoic acid, heptanoic acid, butanoic acid, hexanoic acid and benzoic acid. In Moorena producens (strain JHB), this protein is Medium-chain-fatty-acid--[acyl-carrier-protein] ligase JamA.